Consider the following 334-residue polypeptide: tRNA N6-adenosine threonylcarbamoyltransferase (334 aa).

Fe cation is bound by residues His107 and His111. Substrate contacts are provided by residues 129-133, Asp162, Gly175, and Asn269; that span reads LVSGG. Fe cation is bound at residue Asp297.

The protein belongs to the KAE1 / TsaD family. The cofactor is Fe(2+).

The protein resides in the cytoplasm. It catalyses the reaction L-threonylcarbamoyladenylate + adenosine(37) in tRNA = N(6)-L-threonylcarbamoyladenosine(37) in tRNA + AMP + H(+). Its function is as follows. Required for the formation of a threonylcarbamoyl group on adenosine at position 37 (t(6)A37) in tRNAs that read codons beginning with adenine. Is involved in the transfer of the threonylcarbamoyl moiety of threonylcarbamoyl-AMP (TC-AMP) to the N6 group of A37, together with TsaE and TsaB. TsaD likely plays a direct catalytic role in this reaction. In Campylobacter concisus (strain 13826), this protein is tRNA N6-adenosine threonylcarbamoyltransferase.